The sequence spans 925 residues: MERDGCAGGGSRGGEGGRAPREGPAGNGRDRGRSHAAEAPGDPQAAASLLAPMDVGEEPLEKAARARTAKDPNTYKVLSLVLSVCVLTTILGCIFGLKPSCAKEVKSCKGRCFERTFGNCRCDAACVELGNCCLDYQETCIEPEHIWTCNKFRCGEKRLTRSLCACSDDCKDKGDCCINYSSVCQGEKSWVEEPCESINEPQCPAGFETPPTLLFSLDGFRAEYLHTWGGLLPVISKLKKCGTYTKNMRPVYPTKTFPNHYSIVTGLYPESHGIIDNKMYDPKMNASFSLKSKEKFNPEWYKGEPIWVTAKYQGLKSGTFFWPGSDVEINGIFPDIYKMYNGSVPFEERILAVLQWLQLPKDERPHFYTLYLEEPDSSGHSYGPVSSEVIKALQRVDGMVGMLMDGLKELNLHRCLNLILISDHGMEQGSCKKYIYLNKYLGDVKNIKVIYGPAARLRPSDVPDKYYSFNYEGIARNLSCREPNQHFKPYLKHFLPKRLHFAKSDRIEPLTFYLDPQWQLALNPSERKYCGSGFHGSDNVFSNMQALFVGYGPGFKHGIEADTFENIEVYNLMCDLLNLTPAPNNGTHGSLNHLLKNPVYTPKHPKEVHPLVQCPFTRNPRDNLGCSCNPSILPIEDFQTQFNLTVAEEKIIKHETLPYGRPRVLQKENTICLLSQHQFMSGYSQDILMPLWTSYTVDRNDSFSTEDFSNCLYQDFRIPLSPVHKCSFYKNNTKVSYGFLSPPQLNKNSSGIYSEALLTTNIVPMYQSFQVIWRYFHDTLLRKYAEERNGVNVVSGPVFDFDYDGRCDSLENLRQKRRVIRNQEILIPTHFFIVLTSCKDTSQTPLHCENLDTLAFILPHRTDNSESCVHGKHDSSWVEELLMLHRARITDVEHITGLSFYQQRKEPVSDILKLKTHLPTFSQED.

The segment covering Met-1–Gly-17 has biased composition (gly residues). Positions Met-1–Pro-43 are disordered. Topologically, residues Met-1–Lys-76 are cytoplasmic. The Di-leucine motif signature appears at Ala-45–Pro-52. A helical; Signal-anchor for type II membrane protein transmembrane segment spans residues Val-77–Leu-97. Residues Lys-98 to Asp-925 are Extracellular-facing. SMB domains are found at residues Glu-104–Glu-144 and His-145–Ser-189. 10 disulfide bridges follow: Cys-108/Cys-122, Cys-112/Cys-140, Cys-120/Cys-133, Cys-126/Cys-132, Cys-149/Cys-166, Cys-154/Cys-184, Cys-164/Cys-177, Cys-170/Cys-176, Cys-195/Cys-241, and Cys-203/Cys-415. An N-linked (GlcNAc...) asparagine glycan is attached at Asn-179. The interval Val-191–Leu-591 is phosphodiesterase. Asp-218, Thr-256, and Asn-277 together coordinate AMP. Asp-218 and Thr-256 together coordinate Zn(2+). The active-site AMP-threonine intermediate is the Thr-256. Residues Thr-256 and Asn-277 each contribute to the CMP site. 2 residues coordinate dTMP: Thr-256 and Asn-277. Thr-256 and Asn-277 together coordinate GMP. Thr-256 carries the post-translational modification Phosphothreonine. Asn-285 carries N-linked (GlcNAc...) asparagine glycosylation. The GMP site is built by Leu-290, Lys-295, and Tyr-340. AMP contacts are provided by Lys-295 and Tyr-340. CMP-binding residues include Lys-295 and Tyr-340. Residue Tyr-340 participates in dTMP binding. N-linked (GlcNAc...) asparagine glycosylation is present at Asn-341. Asp-376 provides a ligand contact to AMP. Residues Asp-376, His-380, Asp-423, and His-424 each coordinate Zn(2+). CMP is bound at residue Asp-376. Asp-376 serves as a coordination point for dTMP. GMP is bound at residue Asp-376. His-380 contacts 2',3'-cGAMP. His-424 lines the AMP pocket. His-424 contributes to the CMP binding site. A dTMP-binding site is contributed by His-424. His-424 contacts GMP. Disulfide bonds link Cys-431–Cys-530, Cys-480–Cys-868, Cys-614–Cys-672, Cys-626–Cys-726, Cys-628–Cys-711, and Cys-838–Cys-848. Asn-477 is a glycosylation site (N-linked (GlcNAc...) asparagine). Ser-532 contributes to the 2',3'-cGAMP binding site. His-535 contacts AMP. His-535 provides a ligand contact to Zn(2+). Position 535 (His-535) interacts with CMP. Residue His-535 participates in dTMP binding. His-535 provides a ligand contact to GMP. Residues Asn-585, Asn-643, Asn-700, Asn-731, and Asn-748 are each glycosylated (N-linked (GlcNAc...) asparagine). A linker region spans residues Asn-597–Ala-647. The segment at His-654–Asp-925 is nuclease-like domain. Ca(2+) contacts are provided by Asp-800, Asp-802, Asp-804, Arg-806, and Asp-808.

The protein belongs to the nucleotide pyrophosphatase/phosphodiesterase family. Homodimer. Interacts with INSR; leading to inhibit INSR autophosphorylation and subsequent activation of INSR kinase activity. As to quaternary structure, monomeric. It depends on Zn(2+) as a cofactor. Post-translationally, autophosphorylated as part of the catalytic cycle of phosphodiesterase/pyrophosphatase activity. N-glycosylated. In terms of processing, the secreted form is produced through cleavage at Lys-103 by intracellular processing. Expressed in plasma cells and also in a number of non-lymphoid tissues, including the distal convoluted tubule of the kidney, chondrocytes and epididymis. Expressed in melanocytes but not in keratinocytes.

Its subcellular location is the cell membrane. The protein resides in the basolateral cell membrane. The protein localises to the secreted. The enzyme catalyses Hydrolytically removes 5'-nucleotides successively from the 3'-hydroxy termini of 3'-hydroxy-terminated oligonucleotides.. It catalyses the reaction a ribonucleoside 5'-triphosphate + H2O = a ribonucleoside 5'-phosphate + diphosphate + H(+). The catalysed reaction is ATP + H2O = AMP + diphosphate + H(+). It carries out the reaction UTP + H2O = UMP + diphosphate + H(+). The enzyme catalyses GTP + H2O = GMP + diphosphate + H(+). It catalyses the reaction CTP + H2O = CMP + diphosphate + H(+). The catalysed reaction is 2',3'-cGAMP + 2 H2O = GMP + AMP + 2 H(+). It carries out the reaction P(1),P(4)-bis(5'-adenosyl) tetraphosphate + H2O = AMP + ATP + 2 H(+). The enzyme catalyses 3',5'-cyclic AMP + H2O = AMP + H(+). At low concentrations of ATP, a phosphorylated intermediate is formed which inhibits further hydrolysis. Its function is as follows. Nucleotide pyrophosphatase that generates diphosphate (PPi) and functions in bone mineralization and soft tissue calcification by regulating pyrophosphate levels. PPi inhibits bone mineralization and soft tissue calcification by binding to nascent hydroxyapatite crystals, thereby preventing further growth of these crystals. Preferentially hydrolyzes ATP, but can also hydrolyze other nucleoside 5' triphosphates such as GTP, CTP and UTP to their corresponding monophosphates with release of pyrophosphate, as well as diadenosine polyphosphates, and also 3',5'-cAMP to AMP. May also be involved in the regulation of the availability of nucleotide sugars in the endoplasmic reticulum and Golgi, and the regulation of purinergic signaling. Inhibits ectopic joint calcification and maintains articular chondrocytes by repressing hedgehog signaling; it is however unclear whether hedgehog inhibition is direct or indirect. Appears to modulate insulin sensitivity and function. Also involved in melanogenesis. Also able to hydrolyze 2',3'-cGAMP (cyclic GMP-AMP), a second messenger that activates TMEM173/STING and triggers type-I interferon production. 2',3'-cGAMP degradation takes place in the lumen or extracellular space, and not in the cytosol where it is produced; the role of 2',3'-cGAMP hydrolysis is therefore unclear. Not able to hydrolyze the 2',3'-cGAMP linkage isomer 3'-3'-cGAMP. The chain is Ectonucleotide pyrophosphatase/phosphodiesterase family member 1 from Homo sapiens (Human).